The primary structure comprises 192 residues: MKNTDAMVIDTLKEVGALLEGHFLLSSGRHSNRYCQCAQLLKYPEKAEKVLKVVADQLKDIDFDLVVGPAMGGVIVAYELGRQLGKPAIFTERENGEMTLRRGFTIEKGQKVVITEDVVTTGKSFKEAAKVIEEQGGEVVAVVCIVDRTPGNVTDFPMYSSIKLDIESFEAENCPLCKEGVPYIKPGSRNIK.

116–124 (EDVVTTGKS) contributes to the 5-phospho-alpha-D-ribose 1-diphosphate binding site. 2 residues coordinate orotate: threonine 120 and arginine 148.

This sequence belongs to the purine/pyrimidine phosphoribosyltransferase family. PyrE subfamily. In terms of assembly, homodimer. Mg(2+) is required as a cofactor.

It carries out the reaction orotidine 5'-phosphate + diphosphate = orotate + 5-phospho-alpha-D-ribose 1-diphosphate. The protein operates within pyrimidine metabolism; UMP biosynthesis via de novo pathway; UMP from orotate: step 1/2. Its function is as follows. Catalyzes the transfer of a ribosyl phosphate group from 5-phosphoribose 1-diphosphate to orotate, leading to the formation of orotidine monophosphate (OMP). The chain is Orotate phosphoribosyltransferase from Clostridium perfringens (strain ATCC 13124 / DSM 756 / JCM 1290 / NCIMB 6125 / NCTC 8237 / Type A).